A 303-amino-acid chain; its full sequence is Probable cell division protein WhiA (303 aa).

Positions 272–303 (SIQQLADSLSTPLTKSGVNHRLRKINKIADEL) form a DNA-binding region, H-T-H motif.

The protein belongs to the WhiA family.

Functionally, involved in cell division and chromosome segregation. This chain is Probable cell division protein WhiA, found in Streptococcus pneumoniae serotype 4 (strain ATCC BAA-334 / TIGR4).